A 111-amino-acid chain; its full sequence is Putative protein YddJ (111 aa).

This is Putative protein YddJ (yddJ) from Escherichia coli (strain K12).